A 501-amino-acid polypeptide reads, in one-letter code: G protein-activated inward rectifier potassium channel 1 (501 aa).

The segment at 1-40 (MSALRRKFGDDYQVVTTSSSGSGLQPQGPGQGPQQQLVPK) is disordered. Topologically, residues 1-80 (MSALRRKFGD…LFTTLVDLKW (80 aa)) are cytoplasmic. A compositionally biased stretch (low complexity) spans 18-37 (SSSGSGLQPQGPGQGPQQQL). The helical transmembrane segment at 81–105 (RWNLFIFILTYTVAWLFMASMWWVI) threads the bilayer. At 106-129 (AYTRGDLNKAHVGNYTPCVANVYN) the chain is on the extracellular side. A glycan (N-linked (GlcNAc...) asparagine) is linked at N119. The segment at residues 130–141 (FPSAFLFFIETE) is an intramembrane region (helical; Pore-forming). An intramembrane region (pore-forming) is located at residues 142 to 148 (ATIGYGY). The Selectivity filter motif lies at 143–148 (TIGYGY). The Extracellular segment spans residues 149-157 (RYITDKCPE). Residues 158 to 179 (GIILFLFQSILGSIVDAFLIGC) form a helical membrane-spanning segment. The Cytoplasmic portion of the chain corresponds to 180–501 (MFIKMSQPKK…LRKMNSDRFT (322 aa)). A polyphosphoinositide (PIP2)-binding region spans residues 182 to 209 (IKMSQPKKRAETLMFSEHAVISMRDGKL). 2 positions are modified to phosphoserine: S385 and S424. A compositionally biased stretch (polar residues) spans 456–467 (TKMLSDPMSQSV). The interval 456–501 (TKMLSDPMSQSVADLPPKLQKMAGGPTRMEGNLPAKLRKMNSDRFT) is disordered.

This sequence belongs to the inward rectifier-type potassium channel (TC 1.A.2.1) family. KCNJ3 subfamily. Associates with KCNJ5/GIRK4 or KCNJ6/GIRK2 to form a G-protein activated heteromultimer pore-forming unit. The resulting inward current is much larger. Associates with KCNJ9/GIRK3 to form a G-protein activated heteromultimer pore-forming unit.

It localises to the membrane. It catalyses the reaction K(+)(in) = K(+)(out). Its activity is regulated as follows. Heteromultimer composed of KCNJ3/GIRK1 and KCNJ5/GIRK4 is activated by phosphatidylinositol 4,5 biphosphate (PtdIns(4,5)P2). In terms of biological role, inward rectifier potassium channels are characterized by a greater tendency to allow potassium to flow into the cell rather than out of it. Their voltage dependence is regulated by the concentration of extracellular potassium; as external potassium is raised, the voltage range of the channel opening shifts to more positive voltages. The inward rectification is mainly due to the blockage of outward current by internal magnesium. This potassium channel is controlled by G proteins. This receptor plays a crucial role in regulating the heartbeat. Forms a functional channel in association with KCNJ9/GIRK3. This Rattus norvegicus (Rat) protein is G protein-activated inward rectifier potassium channel 1 (Kcnj3).